We begin with the raw amino-acid sequence, 305 residues long: DNA-directed RNA polymerase 35 kDa subunit (305 aa).

Belongs to the poxviridae DNA-directed RNA polymerase 35 kDa subunit family. As to quaternary structure, the DNA-dependent RNA polymerase used for intermediate and late genes expression consists of eight subunits 147 kDa, 133 kDa, 35 kDa, 30 kDa, 22 kDa, 19 kDa, 18 kDa and 7 kDa totalling more than 500 kDa in mass. The same holoenzyme, with the addition of the transcription-specificity factor RAP94, is used for early gene expression.

The protein resides in the virion. It carries out the reaction RNA(n) + a ribonucleoside 5'-triphosphate = RNA(n+1) + diphosphate. Part of the DNA-dependent RNA polymerase which catalyzes the transcription of viral DNA into RNA using the four ribonucleoside triphosphates as substrates. Responsible for the transcription of early, intermediate and late genes. DNA-dependent RNA polymerase associates with the early transcription factor (ETF) thereby allowing the early genes transcription. Late transcription, and probably also intermediate transcription, require newly synthesized RNA polymerase. The polypeptide is DNA-directed RNA polymerase 35 kDa subunit (RPO35) (Rabbitpox virus (strain Utrecht) (RPV)).